A 213-amino-acid polypeptide reads, in one-letter code: Uracil phosphoribosyltransferase (213 aa).

5-phospho-alpha-D-ribose 1-diphosphate is bound by residues R78, R103, and 130 to 138 (DPMLATGGS). Uracil-binding positions include I197 and 202–204 (GDA). A 5-phospho-alpha-D-ribose 1-diphosphate-binding site is contributed by D203.

This sequence belongs to the UPRTase family. Requires Mg(2+) as cofactor.

It carries out the reaction UMP + diphosphate = 5-phospho-alpha-D-ribose 1-diphosphate + uracil. The protein operates within pyrimidine metabolism; UMP biosynthesis via salvage pathway; UMP from uracil: step 1/1. Its activity is regulated as follows. Allosterically activated by GTP. Catalyzes the conversion of uracil and 5-phospho-alpha-D-ribose 1-diphosphate (PRPP) to UMP and diphosphate. This Cutibacterium acnes (strain DSM 16379 / KPA171202) (Propionibacterium acnes) protein is Uracil phosphoribosyltransferase.